Here is a 687-residue protein sequence, read N- to C-terminus: Dictomallein (687 aa).

Disordered regions lie at residues methionine 1–leucine 45 and threonine 73–alanine 112. The Peptidase M66 domain occupies proline 233–alanine 501. Histidine 393 contributes to the Zn(2+) binding site. Glutamate 394 is a catalytic residue. Positions 397 and 403 each coordinate Zn(2+).

This sequence belongs to the dictomallein family. It depends on Zn(2+) as a cofactor.

The sequence is that of Dictomallein (dtmL) from Burkholderia mallei (strain NCTC 10247).